The chain runs to 208 residues: dITP/XTP pyrophosphatase (208 aa).

Position 17 to 22 (17 to 22) interacts with substrate; that stretch reads SNNPGK. Residues Asp-49 and Asp-78 each contribute to the Mg(2+) site. The Proton acceptor role is filled by Asp-78. Residues Ser-79, 164–167, Lys-187, and 192–193 each bind substrate; these read FGYD and HR.

It belongs to the HAM1 NTPase family. As to quaternary structure, homodimer. Mg(2+) is required as a cofactor.

The catalysed reaction is XTP + H2O = XMP + diphosphate + H(+). The enzyme catalyses dITP + H2O = dIMP + diphosphate + H(+). It catalyses the reaction ITP + H2O = IMP + diphosphate + H(+). Functionally, pyrophosphatase that catalyzes the hydrolysis of nucleoside triphosphates to their monophosphate derivatives, with a high preference for the non-canonical purine nucleotides XTP (xanthosine triphosphate), dITP (deoxyinosine triphosphate) and ITP. Seems to function as a house-cleaning enzyme that removes non-canonical purine nucleotides from the nucleotide pool, thus preventing their incorporation into DNA/RNA and avoiding chromosomal lesions. The sequence is that of dITP/XTP pyrophosphatase from Burkholderia pseudomallei (strain K96243).